Consider the following 584-residue polypeptide: ATP-dependent ubiquitin transferase-like protein Cap2 (584 aa).

The interval 1–137 (MKQELHHTLL…SGTSNDVELE (137 aa)) is E2-like domain. The active-site For E2-like domain is the Cys-90. Residues 138–338 (GEFSAYWQSE…LLSRNQSRPD (201 aa)) form a linker domain region. Positions 339–584 (VGNLSQKRIA…RFSGCNICDE (246 aa)) are adenylation plus E1-like domain. Cys-522 (for E1-like domain) is an active-site residue.

It in the C-terminal section; belongs to the HesA/MoeB/ThiF family. Interacts with CD-NTase DncV in the presence and absence of phage T2. A Cap2 dimer is bound on either side by a DncV monomer.

In terms of biological role, CD-NTase priming component of a CBASS antiviral system. CBASS (cyclic oligonucleotide-based antiphage signaling system) provides immunity against bacteriophages. The CD-NTase protein (DncV) synthesizes cyclic nucleotides in response to infection; these serve as specific second messenger signals. The signals activate a diverse range of effectors, leading to bacterial cell death and thus abortive phage infection. A type II-A(GA) CBASS system. Primes DncV; acts as a protein transferase, conjugating DncV, the CD-NTase, to unidentified target(s) in the cell via an E1-E2 ubiquitin transferase-like mechanism. During the conjugation reaction DncV is probably transiently attached to AMP. Protein conjugation requires ATP. Its function is as follows. Protects E.coli against phage infection. When the CBASS operon (capV-dncV-cap2-cap3) is introduced in E.coli MG1655 there is about 100-fold protection against phages P1 and T2. When the operon is introduced in E.coli MG1655 there is a more than 10(3) decrease in the efficiency of T2 plaque formation. Protects 100-fold against phage T5, offers no protection against T7. When the operon is introduced in E.coli MG1655 it protects against phages T2, T4, T5 and T6. Another paper shows the operon confers protection against phages P1, T2, T5 and T6 but not T4 or lambda. This is ATP-dependent ubiquitin transferase-like protein Cap2 from Vibrio cholerae serotype O1 (strain ATCC 39315 / El Tor Inaba N16961).